Consider the following 262-residue polypeptide: Shikimate dehydrogenase (NADP(+)) (262 aa).

Residues 14-16 (SAS) and threonine 60 contribute to the shikimate site. Catalysis depends on lysine 64, which acts as the Proton acceptor. 2 residues coordinate shikimate: asparagine 85 and aspartate 100. NADP(+) is bound by residues 121–125 (GAGGA), 145–150 (NRTAER), and phenylalanine 203. Tyrosine 205 lines the shikimate pocket. Glycine 227 serves as a coordination point for NADP(+).

The protein belongs to the shikimate dehydrogenase family. Homodimer.

The enzyme catalyses shikimate + NADP(+) = 3-dehydroshikimate + NADPH + H(+). It participates in metabolic intermediate biosynthesis; chorismate biosynthesis; chorismate from D-erythrose 4-phosphate and phosphoenolpyruvate: step 4/7. Functionally, involved in the biosynthesis of the chorismate, which leads to the biosynthesis of aromatic amino acids. Catalyzes the reversible NADPH linked reduction of 3-dehydroshikimate (DHSA) to yield shikimate (SA). The chain is Shikimate dehydrogenase (NADP(+)) from Pyrobaculum aerophilum (strain ATCC 51768 / DSM 7523 / JCM 9630 / CIP 104966 / NBRC 100827 / IM2).